A 393-amino-acid chain; its full sequence is Cysteine protease ATG4B (393 aa).

N-acetylmethionine is present on Met1. Residue Ser34 is modified to Phosphoserine. Cys74 (nucleophile) is an active-site residue. Cys189 carries the S-nitrosocysteine modification. Catalysis depends on residues Asp278 and His280. Cys292 and Cys301 each carry S-nitrosocysteine. The cysteines at positions 292 and 361 are disulfide-linked. Ser316 and Ser383 each carry phosphoserine. An LIR motif is present at residues 388-391; the sequence is FEIL. Residue Ser392 is modified to Phosphoserine.

The protein belongs to the peptidase C54 family. Interacts with PFKP; promoting phosphorylation of ATG4B at Ser-34. Interacts with GBP7. Phosphorylation at Ser-383 and Ser-392 promotes autophagy by increasing protein delipidation activity without affecting proteolytic activation of ATG8 proteins. Phosphorylation at Ser-316 by ULK1 inhibits autophagy by decreasing both proteolytic activation and delipidation activities. Phosphorylation at Ser-316 is dephosphorylated by protein phosphatase 2A (PP2A). Phosphorylation at Ser-34 by AKT2 promotes its hydrolase activity, leading to increased proteolytic activation and delipidation of ATG8 family proteins. Phosphorylation at Ser-34 by AKT1 promotes mitochondrial localization and inhibition of the F1F0-ATP synthase activity, leading to elevation of mitochondrial reactive oxygen species (ROS). In terms of processing, ubiquitinated by RNF5, leading to its degradation by the proteasome. Post-translationally, S-nitrosylation at Cys-189 and Cys-292 in response to high glucose decreases both proteolytic activation and delipidation activities. O-glycosylated by OGT, leading to increase protease activity, thereby promoting the proteolytic activation of ATG8 family proteins. In terms of processing, forms reversible intrachain disulfide bonds in response to oxidative stress. Forms interchain disulfide bonds, leading to formation of homooligomers in response to oxidation.

It is found in the cytoplasm. The protein localises to the cytosol. It localises to the cytoplasmic vesicle. The protein resides in the autophagosome. Its subcellular location is the endoplasmic reticulum. It is found in the mitochondrion. It catalyses the reaction [protein]-C-terminal L-amino acid-glycyl-phosphatidylethanolamide + H2O = [protein]-C-terminal L-amino acid-glycine + a 1,2-diacyl-sn-glycero-3-phosphoethanolamine. It carries out the reaction [protein]-C-terminal L-amino acid-glycyl-phosphatidylserine + H2O = [protein]-C-terminal L-amino acid-glycine + a 1,2-diacyl-sn-glycero-3-phospho-L-serine. With respect to regulation, inhibited by N-ethylmaleimide. Redox-regulated during autophagy since reducing conditions activate ATG4A whereas an oxidizing environment such as the presence of H(2)O(2) inhibits its activity. The cysteine protease activity compounds is inhibited by styrylquinoline compounds 4-28 and LV-320. Cysteine protease that plays a key role in autophagy by mediating both proteolytic activation and delipidation of ATG8 family proteins. Required for canonical autophagy (macroautophagy), non-canonical autophagy as well as for mitophagy. The protease activity is required for proteolytic activation of ATG8 family proteins: cleaves the C-terminal amino acid of ATG8 proteins MAP1LC3A, MAP1LC3B, MAP1LC3C, GABARAPL1, GABARAPL2 and GABARAP, to reveal a C-terminal glycine. Exposure of the glycine at the C-terminus is essential for ATG8 proteins conjugation to phosphatidylethanolamine (PE) and insertion to membranes, which is necessary for autophagy. Protease activity is also required to counteract formation of high-molecular weight conjugates of ATG8 proteins (ATG8ylation): acts as a deubiquitinating-like enzyme that removes ATG8 conjugated to other proteins, such as ATG3. In addition to the protease activity, also mediates delipidation of ATG8 family proteins. Catalyzes delipidation of PE-conjugated forms of ATG8 proteins during macroautophagy. Also involved in non-canonical autophagy, a parallel pathway involving conjugation of ATG8 proteins to single membranes at endolysosomal compartments, by catalyzing delipidation of ATG8 proteins conjugated to phosphatidylserine (PS). Compared to other members of the family (ATG4A, ATG4C or ATG4C), constitutes the major protein for proteolytic activation of ATG8 proteins, while it displays weaker delipidation activity than other ATG4 paralogs. Involved in phagophore growth during mitophagy independently of its protease activity and of ATG8 proteins: acts by regulating ATG9A trafficking to mitochondria and promoting phagophore-endoplasmic reticulum contacts during the lipid transfer phase of mitophagy. Functionally, (Microbial infection) Mediates cleavage of an ATG8 protein homolog coded in the genome of cytopathogenic bovine viral diarrhea virus (BVDV). The protein is Cysteine protease ATG4B (ATG4B) of Bos taurus (Bovine).